Reading from the N-terminus, the 294-residue chain is UDP-3-O-acyl-N-acetylglucosamine deacetylase (294 aa).

Positions 75, 232, and 236 each coordinate Zn(2+). Residue histidine 259 is the Proton donor of the active site.

This sequence belongs to the LpxC family. Requires Zn(2+) as cofactor.

The enzyme catalyses a UDP-3-O-[(3R)-3-hydroxyacyl]-N-acetyl-alpha-D-glucosamine + H2O = a UDP-3-O-[(3R)-3-hydroxyacyl]-alpha-D-glucosamine + acetate. Its pathway is glycolipid biosynthesis; lipid IV(A) biosynthesis; lipid IV(A) from (3R)-3-hydroxytetradecanoyl-[acyl-carrier-protein] and UDP-N-acetyl-alpha-D-glucosamine: step 2/6. Catalyzes the hydrolysis of UDP-3-O-myristoyl-N-acetylglucosamine to form UDP-3-O-myristoylglucosamine and acetate, the committed step in lipid A biosynthesis. The sequence is that of UDP-3-O-acyl-N-acetylglucosamine deacetylase from Campylobacter hominis (strain ATCC BAA-381 / DSM 21671 / CCUG 45161 / LMG 19568 / NCTC 13146 / CH001A).